Consider the following 506-residue polypeptide: Cobyric acid synthase (506 aa).

Positions 251–448 (DIDIAVVQVP…LHGLFDSDAF (198 aa)) constitute a GATase cobBQ-type domain. Residue C332 is the Nucleophile of the active site. Residue H440 is part of the active site.

This sequence belongs to the CobB/CobQ family. CobQ subfamily.

Its pathway is cofactor biosynthesis; adenosylcobalamin biosynthesis. Functionally, catalyzes amidations at positions B, D, E, and G on adenosylcobyrinic A,C-diamide. NH(2) groups are provided by glutamine, and one molecule of ATP is hydrogenolyzed for each amidation. The protein is Cobyric acid synthase of Citrobacter koseri (strain ATCC BAA-895 / CDC 4225-83 / SGSC4696).